Reading from the N-terminus, the 745-residue chain is Dipeptidyl aminopeptidase 4 (745 aa).

The signal sequence occupies residues 1-22; the sequence is MRLALFALFALMTVATALPAHA. Substrate contacts are provided by E208 and E209. Active-site charge relay system residues include S613, D689, and H721.

It belongs to the peptidase S9B family. In terms of assembly, homodimer.

Its subcellular location is the cytoplasm. It is found in the periplasm. It catalyses the reaction Release of an N-terminal dipeptide, Xaa-Yaa-|-Zaa-, from a polypeptide, preferentially when Yaa is Pro, provided Zaa is neither Pro nor hydroxyproline.. Its activity is regulated as follows. Completely inhibited by the serine protease inhibitor diisopropyl fluorophosphate (DFP) and moderately by N-tosyl-L-phenyl-alanyl chloromethyl ketone (TPCK). Somewhat inhibited by phenylmethanesulfonyl fluoride (PMSF). Activity is not affected by thiol- or metalloprotease inhibitors, such as iodoacetate (IAA), EDTA, N-tosyl-L-lysyl chloromethyl ketone (TLCK), o-phenanthlorine, N-ethylmaleimide (NEM) or dithiothreitol (DTT). Functionally, catalyzes the sequential release of Tyr-Pro, Phe-Pro and Gly-Pro from the N-terminus of peptides and proteins. Is able to cleaves bioactive peptide beta-casomorphin. This chain is Dipeptidyl aminopeptidase 4, found in Pseudoxanthomonas mexicana.